A 489-amino-acid chain; its full sequence is Corticosteroid-binding protein (489 aa).

This sequence to yeast FMS1.

May be a flavoprotein with enzymatic activity. This Candida albicans (strain SC5314 / ATCC MYA-2876) (Yeast) protein is Corticosteroid-binding protein (CBP1).